The sequence spans 205 residues: Ras-related protein RABC2b (205 aa).

20 to 27 (GDSGVGKS) contacts GTP. Residues 41–49 (LAPTIGVDF) carry the Effector region motif. GTP contacts are provided by residues 67-71 (DTAGQ), 127-130 (NKVD), and 157-158 (SA). Residues cysteine 202 and cysteine 203 are each lipidated (S-geranylgeranyl cysteine).

Belongs to the small GTPase superfamily. Rab family.

The protein resides in the cell membrane. Its function is as follows. Intracellular vesicle trafficking and protein transport. The chain is Ras-related protein RABC2b (RABC2B) from Arabidopsis thaliana (Mouse-ear cress).